The following is a 153-amino-acid chain: Ribosome maturation factor RimP (153 aa).

It belongs to the RimP family.

It localises to the cytoplasm. Required for maturation of 30S ribosomal subunits. This is Ribosome maturation factor RimP from Chromohalobacter salexigens (strain ATCC BAA-138 / DSM 3043 / CIP 106854 / NCIMB 13768 / 1H11).